The following is a 259-amino-acid chain: Hydroxyacylglutathione hydrolase (259 aa).

Residues His-56, His-58, Asp-60, His-61, His-112, Asp-133, and His-171 each contribute to the Zn(2+) site.

Belongs to the metallo-beta-lactamase superfamily. Glyoxalase II family. In terms of assembly, monomer. Requires Zn(2+) as cofactor.

The catalysed reaction is an S-(2-hydroxyacyl)glutathione + H2O = a 2-hydroxy carboxylate + glutathione + H(+). It functions in the pathway secondary metabolite metabolism; methylglyoxal degradation; (R)-lactate from methylglyoxal: step 2/2. Thiolesterase that catalyzes the hydrolysis of S-D-lactoyl-glutathione to form glutathione and D-lactic acid. This chain is Hydroxyacylglutathione hydrolase, found in Pseudomonas putida (strain ATCC 700007 / DSM 6899 / JCM 31910 / BCRC 17059 / LMG 24140 / F1).